A 365-amino-acid polypeptide reads, in one-letter code: tRNA dimethylallyltransferase (365 aa).

23–30 lines the ATP pocket; it reads APTASGKT. 25 to 30 is a substrate binding site; that stretch reads TASGKT. Interaction with substrate tRNA regions lie at residues 48 to 51, 172 to 176, and 256 to 261; these read DSAL, QRITR, and RCVGYR.

This sequence belongs to the IPP transferase family. As to quaternary structure, monomer. It depends on Mg(2+) as a cofactor.

It carries out the reaction adenosine(37) in tRNA + dimethylallyl diphosphate = N(6)-dimethylallyladenosine(37) in tRNA + diphosphate. Its function is as follows. Catalyzes the transfer of a dimethylallyl group onto the adenine at position 37 in tRNAs that read codons beginning with uridine, leading to the formation of N6-(dimethylallyl)adenosine (i(6)A). This chain is tRNA dimethylallyltransferase, found in Psychrobacter sp. (strain PRwf-1).